Reading from the N-terminus, the 259-residue chain is Protein unc-50 homolog (259 aa).

Residues Met-1–Leu-15 are compositionally biased toward polar residues. Residues Met-1–Arg-22 form a disordered region. At Met-1–Pro-80 the chain is on the cytoplasmic side. A helical transmembrane segment spans residues Ala-81–Leu-101. Over Asp-102–Thr-110 the chain is Lumenal. Residues Leu-111–Met-131 traverse the membrane as a helical segment. The Cytoplasmic segment spans residues Trp-132–Phe-162. Residues Tyr-163–Ile-183 form a helical membrane-spanning segment. Residues Ser-184 to Trp-198 are Lumenal-facing. A helical transmembrane segment spans residues Leu-199–Leu-219. Residues Lys-220–Thr-222 are Cytoplasmic-facing. The helical transmembrane segment at Val-223–Gly-243 threads the bilayer. Residues Trp-244–Gln-259 lie on the Lumenal side of the membrane.

The protein belongs to the unc-50 family.

The protein localises to the nucleus inner membrane. The protein resides in the golgi apparatus membrane. Involved in the cell surface expression of neuronal nicotinic receptors. Binds RNA. This Danio rerio (Zebrafish) protein is Protein unc-50 homolog (unc50).